The sequence spans 203 residues: ATP-dependent Clp protease proteolytic subunit 2 (203 aa).

Ser98 (nucleophile) is an active-site residue. His123 is an active-site residue.

It belongs to the peptidase S14 family. Fourteen ClpP subunits assemble into 2 heptameric rings which stack back to back to give a disk-like structure with a central cavity, resembling the structure of eukaryotic proteasomes.

The protein localises to the cytoplasm. The enzyme catalyses Hydrolysis of proteins to small peptides in the presence of ATP and magnesium. alpha-casein is the usual test substrate. In the absence of ATP, only oligopeptides shorter than five residues are hydrolyzed (such as succinyl-Leu-Tyr-|-NHMec, and Leu-Tyr-Leu-|-Tyr-Trp, in which cleavage of the -Tyr-|-Leu- and -Tyr-|-Trp bonds also occurs).. Its function is as follows. Cleaves peptides in various proteins in a process that requires ATP hydrolysis. Has a chymotrypsin-like activity. Plays a major role in the degradation of misfolded proteins. The polypeptide is ATP-dependent Clp protease proteolytic subunit 2 (Chlamydia trachomatis serovar A (strain ATCC VR-571B / DSM 19440 / HAR-13)).